The sequence spans 968 residues: Phosphoenolpyruvate carboxylase (968 aa).

A Phosphoserine modification is found at Ser11. Active-site residues include His172 and Lys602.

Belongs to the PEPCase type 1 family. In terms of assembly, homotetramer. Mg(2+) is required as a cofactor.

It localises to the cytoplasm. It catalyses the reaction oxaloacetate + phosphate = phosphoenolpyruvate + hydrogencarbonate. By light-reversible phosphorylation. Through the carboxylation of phosphoenolpyruvate (PEP) it forms oxaloacetate, a four-carbon dicarboxylic acid source for the tricarboxylic acid cycle. The protein is Phosphoenolpyruvate carboxylase of Phaseolus vulgaris (Kidney bean).